We begin with the raw amino-acid sequence, 867 residues long: Cadherin-related family member 1 (867 aa).

A signal peptide spans methionine 1–alanine 21. Over asparagine 22–lysine 701 the chain is Extracellular. Cadherin domains are found at residues asparagine 36 to phenylalanine 135, isoleucine 136 to phenylalanine 247, valine 248 to phenylalanine 354, proline 360 to phenylalanine 473, threonine 474 to phenylalanine 577, and tyrosine 574 to alanine 689. Asparagine 58 and asparagine 89 each carry an N-linked (GlcNAc...) asparagine glycan. N-linked (GlcNAc...) asparagine glycans are attached at residues asparagine 288 and asparagine 297. Residues alanine 702–threonine 722 traverse the membrane as a helical segment. The Cytoplasmic segment spans residues alanine 723 to phenylalanine 867. A disordered region spans residues lysine 767–proline 843. The segment covering glutamate 777–serine 786 has biased composition (polar residues). Over residues proline 790–alanine 802 the composition is skewed to pro residues.

Interacts with PROM1. Post-translationally, undergoes proteolytic cleavage; produces a soluble 95 kDa N-terminal fragment and a 25 kDa cell-associated C-terminal fragment. Expressed in photoreceptor cells of the outer nuclear layer of the retina.

It localises to the cell membrane. In terms of biological role, potential calcium-dependent cell-adhesion protein. May be required for the structural integrity of the outer segment (OS) of photoreceptor cells. The polypeptide is Cadherin-related family member 1 (CDHR1) (Bos taurus (Bovine)).